The chain runs to 267 residues: Tryptophan synthase alpha chain (267 aa).

Residues glutamate 43 and aspartate 54 each act as proton acceptor in the active site.

Belongs to the TrpA family. Tetramer of two alpha and two beta chains.

It catalyses the reaction (1S,2R)-1-C-(indol-3-yl)glycerol 3-phosphate + L-serine = D-glyceraldehyde 3-phosphate + L-tryptophan + H2O. It functions in the pathway amino-acid biosynthesis; L-tryptophan biosynthesis; L-tryptophan from chorismate: step 5/5. In terms of biological role, the alpha subunit is responsible for the aldol cleavage of indoleglycerol phosphate to indole and glyceraldehyde 3-phosphate. This chain is Tryptophan synthase alpha chain, found in Bacillus subtilis (strain 168).